The sequence spans 512 residues: D-alanine--D-alanyl carrier protein ligase (512 aa).

152-153 (TS) lines the ATP pocket. Asp-199 serves as a coordination point for D-alanine. 294–299 (NAYGPT) serves as a coordination point for ATP. Val-303 is a D-alanine binding site. Residues Asp-385, 397–400 (YGGR), and Lys-499 contribute to the ATP site. Lys-499 contacts D-alanine.

Belongs to the ATP-dependent AMP-binding enzyme family. DltA subfamily.

It is found in the cytoplasm. It carries out the reaction holo-[D-alanyl-carrier protein] + D-alanine + ATP = D-alanyl-[D-alanyl-carrier protein] + AMP + diphosphate. It functions in the pathway cell wall biogenesis; lipoteichoic acid biosynthesis. Its function is as follows. Catalyzes the first step in the D-alanylation of lipoteichoic acid (LTA), the activation of D-alanine and its transfer onto the D-alanyl carrier protein (Dcp) DltC. In an ATP-dependent two-step reaction, forms a high energy D-alanyl-AMP intermediate, followed by transfer of the D-alanyl residue as a thiol ester to the phosphopantheinyl prosthetic group of the Dcp. D-alanylation of LTA plays an important role in modulating the properties of the cell wall in Gram-positive bacteria, influencing the net charge of the cell wall. This Streptococcus equi subsp. equi (strain 4047) protein is D-alanine--D-alanyl carrier protein ligase.